The following is a 400-amino-acid chain: Formate-dependent phosphoribosylglycinamide formyltransferase (400 aa).

N(1)-(5-phospho-beta-D-ribosyl)glycinamide contacts are provided by residues 22–23 (EL) and glutamate 82. ATP-binding positions include arginine 115, lysine 157, 162 to 167 (SSGKGQ), 197 to 200 (EGFV), and glutamate 205. In terms of domain architecture, ATP-grasp spans 120–315 (RLAAETLGLP…EFELHARAIL (196 aa)). Residues glutamate 274 and glutamate 286 each coordinate Mg(2+). N(1)-(5-phospho-beta-D-ribosyl)glycinamide is bound by residues aspartate 293, lysine 362, and 369–370 (RR).

The protein belongs to the PurK/PurT family. In terms of assembly, homodimer.

It catalyses the reaction N(1)-(5-phospho-beta-D-ribosyl)glycinamide + formate + ATP = N(2)-formyl-N(1)-(5-phospho-beta-D-ribosyl)glycinamide + ADP + phosphate + H(+). It participates in purine metabolism; IMP biosynthesis via de novo pathway; N(2)-formyl-N(1)-(5-phospho-D-ribosyl)glycinamide from N(1)-(5-phospho-D-ribosyl)glycinamide (formate route): step 1/1. Involved in the de novo purine biosynthesis. Catalyzes the transfer of formate to 5-phospho-ribosyl-glycinamide (GAR), producing 5-phospho-ribosyl-N-formylglycinamide (FGAR). Formate is provided by PurU via hydrolysis of 10-formyl-tetrahydrofolate. The sequence is that of Formate-dependent phosphoribosylglycinamide formyltransferase from Mycolicibacterium gilvum (strain PYR-GCK) (Mycobacterium gilvum (strain PYR-GCK)).